A 356-amino-acid chain; its full sequence is MRVTDFSFELPESLIAHYPQPERSRCRLLSLEGPTGALTHGTFTDLLDKLNPGDVLVFNNTRVIPARLFGRKASGGKIEVLVERMLDDKRILAHIRASKAPKPGTELLLGDDENIHATMTARHGALFEVEFNDERPVLDILNAIGHMPLPPYIDRPDEDADRELYQTVYSEKPGAVAAPTAGLHFDKPLLAALREKGIEMAFVTLHVGAGTFQPVRVDTIEDHIMHSEYAEVPQEVVDAVLAAKARGNRVIAVGTTSVRSLESAAQAAKSDLIEPFFGDTQIFIYPGYQYKVIDALVTNFHLPESTLIMLVSAFAGYEHTMNAYKAAVEQKYRFFSYGDAMFITYNPQAIFERVGE.

This sequence belongs to the QueA family. In terms of assembly, monomer.

Its subcellular location is the cytoplasm. It catalyses the reaction 7-aminomethyl-7-carbaguanosine(34) in tRNA + S-adenosyl-L-methionine = epoxyqueuosine(34) in tRNA + adenine + L-methionine + 2 H(+). The protein operates within tRNA modification; tRNA-queuosine biosynthesis. Functionally, transfers and isomerizes the ribose moiety from AdoMet to the 7-aminomethyl group of 7-deazaguanine (preQ1-tRNA) to give epoxyqueuosine (oQ-tRNA). The chain is S-adenosylmethionine:tRNA ribosyltransferase-isomerase from Salmonella arizonae (strain ATCC BAA-731 / CDC346-86 / RSK2980).